Here is a 192-residue protein sequence, read N- to C-terminus: BON1-associated protein 1 (192 aa).

In terms of domain architecture, C2 spans 1–119 (MIYFGRSIDN…RYSPEGHLNF (119 aa)).

Interacts with BON1 (via VWA domain), BON2 and BON3. Expressed in roots, leaves, stems and flowers.

Its subcellular location is the membrane. Its function is as follows. Negative regulator of cell death and defense responses. Exhibits calcium-dependent phospholipid binding properties. This chain is BON1-associated protein 1 (BAP1), found in Arabidopsis thaliana (Mouse-ear cress).